Here is a 438-residue protein sequence, read N- to C-terminus: Aspartate--tRNA(Asp) ligase (438 aa).

Glutamate 170 is an L-aspartate binding site. The tract at residues 192-195 (QLYK) is aspartate. Arginine 214 serves as a coordination point for L-aspartate. Residues 214 to 216 (RAE), 222 to 224 (RHL), and glutamate 361 contribute to the ATP site. Mg(2+)-binding residues include glutamate 361 and serine 364. L-aspartate contacts are provided by serine 364 and arginine 368. Position 409–412 (409–412 (GAER)) interacts with ATP.

This sequence belongs to the class-II aminoacyl-tRNA synthetase family. Type 2 subfamily. As to quaternary structure, homodimer. The cofactor is Mg(2+).

Its subcellular location is the cytoplasm. It carries out the reaction tRNA(Asp) + L-aspartate + ATP = L-aspartyl-tRNA(Asp) + AMP + diphosphate. Functionally, catalyzes the attachment of L-aspartate to tRNA(Asp) in a two-step reaction: L-aspartate is first activated by ATP to form Asp-AMP and then transferred to the acceptor end of tRNA(Asp). This is Aspartate--tRNA(Asp) ligase from Pyrococcus abyssi (strain GE5 / Orsay).